Here is a 191-residue protein sequence, read N- to C-terminus: Stress response regulator protein 1 (191 aa).

Positions serine 62–glutamine 181 constitute a Response regulatory domain. Aspartate 114 bears the 4-aspartylphosphate mark.

Functionally, required for stress adaptation, morphogenesis and virulence. This Clavispora lusitaniae (strain ATCC 42720) (Yeast) protein is Stress response regulator protein 1 (SRR1).